The sequence spans 289 residues: MKKLTSTTTTLWDNKLFINNLKNFMQTNTESNNNKTTAQEWKSFILVVVIALMIRILIIESFVVPTGSMKATILENDRIFGTKYSYGYSNYSLSFFDFIHLFKGRIFARTPERGDIIIFRPPHEMNTRYIKRLIGLPGDKVQLIDDVIYINDEKIERVESGIYVSEEGRKYLKFKETLPNGKTYFSYKLAPVLGIMFNDKYGNTDAFYVPEGEYFFLGDNRDQSNDSRIDLGFVPFENFIAKAQFIWFSTKITWWDSDIGVINLILKLKPWAESIRFNRIFRNLYSIED.

At 1-43 (MKKLTSTTTTLWDNKLFINNLKNFMQTNTESNNNKTTAQEWKS) the chain is on the cytoplasmic side. The chain crosses the membrane as a helical span at residues 44–64 (FILVVVIALMIRILIIESFVV). Residues 65–289 (PTGSMKATIL…IFRNLYSIED (225 aa)) lie on the Periplasmic side of the membrane. Active-site residues include Ser-68 and Lys-131.

Belongs to the peptidase S26 family.

It is found in the cell inner membrane. The enzyme catalyses Cleavage of hydrophobic, N-terminal signal or leader sequences from secreted and periplasmic proteins.. This is Signal peptidase I (lepB) from Rickettsia bellii (strain OSU 85-389).